The primary structure comprises 513 residues: MEEIQRYLQLKRSQQHNFLYPLIFQEYIYAFAHDRIFSRSFLSENTGYENKSSLLIVKRLITRMYQQNPFIIFPNDSTQNQFLGHNKNFYSQLISEGFAFIVEIPFFLRLISSLEGKKKKIVKSQNLRSIHSIFPFLEDSFSHLNFVLDILIPQPVHAEILVQTLRYWVKDASSLHLIRFLLNEYCNWNSLIFPKKASSSFSNSKRNQRNQRLFLFLYNSHVCEYESIFFFLRNQSSHLRSTYSRVLLERIYFYGKIEHLVNVVVKVKDFQANLWLVKEPCMHYVRYQRKSLLASKGTSLFMNKWKCFLVTFWQWHFALWFHPRRIYINQLSKNLLEFLGYLSSVQMNPSVVRSQILENSFLINNAIKKFDTLVPIIPLIASLANTKFCNVLGHPISKPVWADLSDSHIIDRFGRICSNLSHYHSGSSKKKSLYRIKYILRLSCARTLARKHKSTVRAFLKRLGSELLEEFLMSEEDVLFLTFPKASSTLRGVYKSRIWYLDILCISDLVNYK.

This sequence belongs to the intron maturase 2 family. MatK subfamily.

Its subcellular location is the plastid. It is found in the chloroplast. Usually encoded in the trnK tRNA gene intron. Probably assists in splicing its own and other chloroplast group II introns. The polypeptide is Maturase K (Keckiella cordifolia (Heart-leafed penstemon)).